A 329-amino-acid polypeptide reads, in one-letter code: MSAAILLAPGDVIKRSSEELKQRQIQINLVDWMESEGGKEDKTEPKEESKAEGSKDGEGTQSESGQKEEGGKETKDADVDRRIHTAVGSGSGTKGSGERANENANRGDGKVGGGGGDADAGVGATGTNGGRWVVLTEEIARAIESKYGTKIDVYRDEVPAQIIEVERSLQKELGISREGVAEQTERLRDLRRKEKNGTHAKAVERGGRKQRKKAHGDAQREGVEEEKTSEEPARIGITIEGVMSQKKLLSMIGGVERKMAPIGARESAVMLVSNSIKDVVRATAYFTAPTGDPHWKEVAREASKKKNILAYTSTGGDVKTEFLHLIDHL.

Disordered stretches follow at residues 28–130 (NLVD…TNGG) and 189–232 (DLRR…SEEP). Composition is skewed to basic and acidic residues over residues 36–58 (EGGK…KDGE), 65–83 (GQKE…DRRI), and 96–109 (SGER…RGDG). K110 contributes to the ATP binding site. Positions 110-129 (KVGGGGGDADAGVGATGTNG) are enriched in gly residues. 2 stretches are compositionally biased toward basic and acidic residues: residues 189-207 (DLRR…ERGG) and 215-232 (HGDA…SEEP).

The protein belongs to the reoviruses VP6 family. As to quaternary structure, homohexamer.

Its subcellular location is the virion. It carries out the reaction ATP + H2O = ADP + phosphate + H(+). In terms of biological role, ATP dependent RNA helicase essential for RNA packaging and viral transcription. Possesses ss- and dsRNA-binding capacity. The sequence is that of Helicase VP6-A (Segment-9) from Bluetongue virus 10 (isolate USA) (BTV 10).